The sequence spans 132 residues: Small ribosomal subunit protein uS8 (132 aa).

Belongs to the universal ribosomal protein uS8 family. Part of the 30S ribosomal subunit. Contacts proteins S5 and S12.

Functionally, one of the primary rRNA binding proteins, it binds directly to 16S rRNA central domain where it helps coordinate assembly of the platform of the 30S subunit. The sequence is that of Small ribosomal subunit protein uS8 from Anaeromyxobacter sp. (strain Fw109-5).